A 397-amino-acid chain; its full sequence is Putative 3'(2'),5'-bisphosphate nucleotidase, mitochondrial (397 aa).

The transit peptide at 1–16 (MYILDTGARFSAVRFS) directs the protein to the mitochondrion. D91 functions as the Proton acceptor in the catalytic mechanism. The Mg(2+) site is built by E114, D174, I176, and D177. T179 acts as the Proton acceptor in catalysis. The adenosine 3',5'-bisphosphate site is built by T179, S305, K308, and D334. AMP is bound by residues S305, K308, and D334. Residue D334 participates in Mg(2+) binding.

The protein belongs to the inositol monophosphatase superfamily. Mg(2+) is required as a cofactor.

Its subcellular location is the mitochondrion. The catalysed reaction is 3'-phosphoadenylyl sulfate + H2O = adenosine 5'-phosphosulfate + phosphate. The enzyme catalyses adenosine 3',5'-bisphosphate + H2O = AMP + phosphate. It carries out the reaction adenosine 2',5'-bisphosphate + H2O = AMP + phosphate. Phosphatase that converts adenosine 3'-phosphate 5'-phosphosulfate (PAPS) to adenosine 5'-phosphosulfate (APS) and 3'(2')-phosphoadenosine 5'-phosphate (PAP) to AMP. This is Putative 3'(2'),5'-bisphosphate nucleotidase, mitochondrial from Arabidopsis thaliana (Mouse-ear cress).